Here is a 65-residue protein sequence, read N- to C-terminus: Large ribosomal subunit protein bL35 (65 aa).

The tract at residues 1 to 26 (MPKMKTHRGAAKRFRKTGTGKLKRGK) is disordered.

It belongs to the bacterial ribosomal protein bL35 family.

The protein is Large ribosomal subunit protein bL35 of Clostridium beijerinckii (strain ATCC 51743 / NCIMB 8052) (Clostridium acetobutylicum).